A 350-amino-acid polypeptide reads, in one-letter code: Purine-binding protein BAB2_0673 (350 aa).

A signal peptide spans 1-17 (MVIATVAGFMLGGAAHA). Positions 36, 185, and 211 each coordinate adenine.

This sequence belongs to the BMP lipoprotein family.

Functionally, binds adenine and probably also other purines, such as guanine. May play a role in adenine and guanine uptake. May be part of an ABC-type uptake system for adenine and similar ligands. The chain is Purine-binding protein BAB2_0673 from Brucella abortus (strain 2308).